An 838-amino-acid chain; its full sequence is Urease (838 aa).

The 439-residue stretch at Gly-400–Phe-838 folds into the Urease domain. Ni(2+) is bound by residues His-405, His-407, and Lys-488. Residue Lys-488 is modified to N6-carboxylysine. Position 490 (His-490) interacts with substrate. Positions 517 and 543 each coordinate Ni(2+). The Proton donor role is filled by His-591. Asp-631 serves as a coordination point for Ni(2+).

In the C-terminal section; belongs to the metallo-dependent hydrolases superfamily. Urease alpha subunit family. As to quaternary structure, homohexamer. Other oligomeric forms may exist depending on pH and presence of salts. Ni(2+) is required as a cofactor. Carboxylation allows a single lysine to coordinate two nickel ions.

The catalysed reaction is urea + 2 H2O + H(+) = hydrogencarbonate + 2 NH4(+). Its pathway is nitrogen metabolism; urea degradation; CO(2) and NH(3) from urea (urease route): step 1/1. With respect to regulation, requires the three urease accessory proteins URED, UREF AND UREG for its activation. Urea hydrolase involved in nitrogen recycling from ureide, purine, and arginine catabolism. The chain is Urease from Arabidopsis thaliana (Mouse-ear cress).